A 345-amino-acid chain; its full sequence is Protein-glutamate methylesterase/protein-glutamine glutaminase 2 (345 aa).

The Response regulatory domain maps to 1 to 116 (MVVDDSAVVR…KQFLVDASDD (116 aa)). D50 is subject to 4-aspartylphosphate. A CheB-type methylesterase domain is found at 154–345 (LQTTERVVAL…AREIMAQMAG (192 aa)). Residues S166, H192, and D288 contribute to the active site.

It belongs to the CheB family. Post-translationally, phosphorylated by CheA. Phosphorylation of the N-terminal regulatory domain activates the methylesterase activity.

The protein resides in the cytoplasm. The catalysed reaction is [protein]-L-glutamate 5-O-methyl ester + H2O = L-glutamyl-[protein] + methanol + H(+). It carries out the reaction L-glutaminyl-[protein] + H2O = L-glutamyl-[protein] + NH4(+). Involved in chemotaxis. Part of a chemotaxis signal transduction system that modulates chemotaxis in response to various stimuli. Catalyzes the demethylation of specific methylglutamate residues introduced into the chemoreceptors (methyl-accepting chemotaxis proteins or MCP) by CheR. Also mediates the irreversible deamidation of specific glutamine residues to glutamic acid. This Albidiferax ferrireducens (strain ATCC BAA-621 / DSM 15236 / T118) (Rhodoferax ferrireducens) protein is Protein-glutamate methylesterase/protein-glutamine glutaminase 2.